Reading from the N-terminus, the 306-residue chain is Follistatin-related protein 1 (306 aa).

A signal peptide spans 1–18; the sequence is MWKRWLALALVAVAWVRA. The Follistatin-like domain maps to 28 to 51; sequence ICANVFCGAGRECAVTEKGEPTCL. 5 cysteine pairs are disulfide-bonded: C29-C40, C34-C50, C52-C82, C56-C75, and C64-C96. The region spanning 46–98 is the Kazal-like domain; sequence GEPTCLCIEQCKPHKRPVCGSNGKTYLNHCELHRDACLTGSKIQVDYDGHCKE. The N-linked (GlcNAc...) asparagine glycan is linked to N142. The EF-hand 1 domain occupies 142-176; sequence NYSEILDKYFKNFDNGDSRLDSSEFLKFVEQNETA. S163 bears the Phosphoserine mark. N-linked (GlcNAc...) asparagine glycosylation is found at N173 and N178. One can recognise an EF-hand 2 domain in the interval 191–226; sequence LRGLCVDALIELSDENADWKLSFQEFLKCLNPSFNP. The region spanning 231–285 is the VWFC domain; sequence CALEDETYADGAETEVDCNRCVCACGNWVCTAMTCDGKNQKGAQTQTEEEMTRYV.

In terms of assembly, homodimer. Interacts with SCN10A. Interacts with DIP2A; DIP2A may act as a cell surface receptor for FSTL1. Interacts with BMP4. Interacts with CD14; this interaction promotes TL4-mediated signaling cascade.

It localises to the secreted. In terms of biological role, secreted glycoprotein that is involved in various physiological processes, such as angiogenesis, regulation of the immune response, cell proliferation and differentiation. Plays a role in the development of the central nervous system, skeletal system, lungs, and ureter. Promotes endothelial cell survival, migration and differentiation into network structures in an AKT-dependent manner. Also promotes survival of cardiac myocytes. Initiates various signaling cascades by activating different receptors on the cell surface such as DIP2A, TLR4 or BMP receptors. This Pongo abelii (Sumatran orangutan) protein is Follistatin-related protein 1 (FSTL1).